Reading from the N-terminus, the 465-residue chain is Lactaldehyde dehydrogenase (465 aa).

Residue 220-225 participates in NAD(+) binding; the sequence is GSVEVG. Active-site residues include glutamate 240 and cysteine 274.

The protein belongs to the aldehyde dehydrogenase family. As to quaternary structure, homotetramer.

The enzyme catalyses (S)-lactaldehyde + NAD(+) + H2O = (S)-lactate + NADH + 2 H(+). Its pathway is cofactor biosynthesis; coenzyme F420 biosynthesis. Functionally, involved in F420 biosynthesis through the oxidation of lactaldehyde to lactate. This chain is Lactaldehyde dehydrogenase, found in Methanococcus aeolicus (strain ATCC BAA-1280 / DSM 17508 / OCM 812 / Nankai-3).